The sequence spans 321 residues: Glucokinase (321 aa).

G8–T13 lines the ATP pocket.

The protein belongs to the bacterial glucokinase family.

It localises to the cytoplasm. It carries out the reaction D-glucose + ATP = D-glucose 6-phosphate + ADP + H(+). In Klebsiella pneumoniae subsp. pneumoniae (strain ATCC 700721 / MGH 78578), this protein is Glucokinase.